The sequence spans 61 residues: Sodium/potassium-transporting ATPase subunit gamma (61 aa).

A helical transmembrane segment spans residues 24 to 44 (KGGLIFAAIAFVVGMLIIFSG).

This sequence belongs to the FXYD family. As to quaternary structure, regulatory subunit of the sodium/potassium-transporting ATPase which is composed of a catalytic alpha subunit, an auxiliary non-catalytic beta subunit and an additional regulatory subunit.

It localises to the membrane. Functionally, may be involved in forming the receptor site for cardiac glycoside binding or may modulate the transport function of the sodium ATPase. In Xenopus laevis (African clawed frog), this protein is Sodium/potassium-transporting ATPase subunit gamma (fxyd2).